The primary structure comprises 684 residues: Calpain-14 (684 aa).

The Calpain catalytic domain maps to 43-336; it reads LFEDTSFPAT…FVLLVICKLT (294 aa). Catalysis depends on residues Cys-101, His-254, and Asn-278. The segment at 337–503 is domain III; it reads PGLLSQEAAQ…KHIFYEIGSN (167 aa). The tract at residues 504 to 517 is linker; sequence SGVVFSKEIEDQNE. Residues 518–683 form a domain IV region; it reads RQDEFFTKFF…KPEWMMMALY (166 aa). 3 EF-hand domains span residues 557 to 592, 586 to 621, and 651 to 684; these read FSLEACQGILALLDLNASGTMSIQEFRDLWKQLKLS, WKQLKLSQKVFHKQDRGSGYLNWEQLHAAMREAGIM, and LRVENMEDVFQNLTQDGKGIYLQKPEWMMMALYS. Residues Asp-570, Asn-572, Ser-574, Thr-576, and Glu-581 each contribute to the Ca(2+) site.

Belongs to the peptidase C2 family. Not expressed in tissues tested.

In terms of biological role, calcium-regulated non-lysosomal thiol-protease. The sequence is that of Calpain-14 (CAPN14) from Homo sapiens (Human).